Consider the following 249-residue polypeptide: DNA repair protein RecO (249 aa).

This sequence belongs to the RecO family.

Functionally, involved in DNA repair and RecF pathway recombination. The polypeptide is DNA repair protein RecO (Sinorhizobium medicae (strain WSM419) (Ensifer medicae)).